The chain runs to 515 residues: Cytochrome P450 1A1 (515 aa).

F225 contacts substrate. C459 is a binding site for heme.

This sequence belongs to the cytochrome P450 family. It depends on heme as a cofactor.

The protein localises to the endoplasmic reticulum membrane. The protein resides in the microsome membrane. It carries out the reaction an organic molecule + reduced [NADPH--hemoprotein reductase] + O2 = an alcohol + oxidized [NADPH--hemoprotein reductase] + H2O + H(+). Functionally, cytochromes P450 are a group of heme-thiolate monooxygenases. They oxidize a variety of structurally unrelated compounds, including steroids, fatty acids, and xenobiotics. This Microgadus tomcod (Atlantic tomcod) protein is Cytochrome P450 1A1 (cyp1a1).